We begin with the raw amino-acid sequence, 232 residues long: Membrane steroid-binding protein 1 (232 aa).

Residues 25–45 (AAFFTAVAAAAALYHVVSGIF) form a helical membrane-spanning segment. Disordered regions lie at residues 48–77 (PPPPPPPRPRDEPEAEPLPPPVQLGEVSEE) and 172–232 (TVPV…AKES). Residues 71–170 (LGEVSEEELR…GKYVKVGTVK (100 aa)) form the Cytochrome b5 heme-binding domain. Positions 73–170 (EVSEEELRQY…GKYVKVGTVK (98 aa)) are steroid-binding. Residues 179–193 (APSTSPETTETAAAA) are compositionally biased toward low complexity. Residues 194–219 (EPEKAPATEEKPREVSSEEVKEKEDA) show a composition bias toward basic and acidic residues.

This sequence belongs to the cytochrome b5 family. MAPR subfamily. As to quaternary structure, interacts with SERL2. As to expression, expressed in leaf sheaths, leaf blades and panicles.

It is found in the cell membrane. In terms of biological role, binds multiple steroid compounds. May act as a coreceptor with SERL2 and enhance its endocytosis. The sequence is that of Membrane steroid-binding protein 1 from Oryza sativa subsp. japonica (Rice).